A 239-amino-acid polypeptide reads, in one-letter code: Cytochrome c oxidase subunit 2 (239 aa).

Residues 1-26 (MATPAQLGLMDAASPVMEEMIYFHDH) lie on the Mitochondrial intermembrane side of the membrane. The chain crosses the membrane as a helical span at residues 27–48 (VMLVLILITCLIFYSMLVLISS). Residues 49 to 62 (KYIYRFLTDGHVIE) lie on the Mitochondrial matrix side of the membrane. The chain crosses the membrane as a helical span at residues 63 to 82 (TVWTVIPAIILVVVALPSLK). The Mitochondrial intermembrane segment spans residues 83 to 239 (LLYLTDELDN…ESLGSLNMKR (157 aa)). Cu cation is bound by residues histidine 161, cysteine 196, glutamate 198, cysteine 200, histidine 204, and methionine 207. A Mg(2+)-binding site is contributed by glutamate 198.

The protein belongs to the cytochrome c oxidase subunit 2 family. As to quaternary structure, component of the cytochrome c oxidase (complex IV, CIV), a multisubunit enzyme composed of a catalytic core of 3 subunits and several supernumerary subunits. The complex exists as a monomer or a dimer and forms supercomplexes (SCs) in the inner mitochondrial membrane with ubiquinol-cytochrome c oxidoreductase (cytochrome b-c1 complex, complex III, CIII). Requires Cu cation as cofactor.

It is found in the mitochondrion inner membrane. It catalyses the reaction 4 Fe(II)-[cytochrome c] + O2 + 8 H(+)(in) = 4 Fe(III)-[cytochrome c] + 2 H2O + 4 H(+)(out). Functionally, component of the cytochrome c oxidase, the last enzyme in the mitochondrial electron transport chain which drives oxidative phosphorylation. The respiratory chain contains 3 multisubunit complexes succinate dehydrogenase (complex II, CII), ubiquinol-cytochrome c oxidoreductase (cytochrome b-c1 complex, complex III, CIII) and cytochrome c oxidase (complex IV, CIV), that cooperate to transfer electrons derived from NADH and succinate to molecular oxygen, creating an electrochemical gradient over the inner membrane that drives transmembrane transport and the ATP synthase. Cytochrome c oxidase is the component of the respiratory chain that catalyzes the reduction of oxygen to water. Electrons originating from reduced cytochrome c in the intermembrane space (IMS) are transferred via the dinuclear copper A center (CU(A)) of subunit 2 and heme A of subunit 1 to the active site in subunit 1, a binuclear center (BNC) formed by heme A3 and copper B (CU(B)). The BNC reduces molecular oxygen to 2 water molecules using 4 electrons from cytochrome c in the IMS and 4 protons from the mitochondrial matrix. The polypeptide is Cytochrome c oxidase subunit 2 (COII) (Branchiostoma lanceolatum (Common lancelet)).